Consider the following 424-residue polypeptide: Arogenate dehydratase 3, chloroplastic (424 aa).

A chloroplast-targeting transit peptide spans Met1–His24. Over residues Glu57–Ser71 the composition is skewed to low complexity. The tract at residues Glu57–Val77 is disordered. Positions Arg122–Arg299 constitute a Prephenate dehydratase domain. The 92-residue stretch at Ser313 to Pro404 folds into the ACT domain.

May interact with GPA1. In terms of tissue distribution, expressed in roots, leaves, stems, flowers and siliques.

The protein resides in the plastid. It localises to the chloroplast stroma. The catalysed reaction is L-arogenate + H(+) = L-phenylalanine + CO2 + H2O. Its pathway is amino-acid biosynthesis; L-phenylalanine biosynthesis; L-phenylalanine from L-arogenate: step 1/1. Functionally, converts the prephenate produced from the shikimate-chorismate pathway into phenylalanine. Together with GCR1 and GPA1, required for blue light-mediated synthesis of phenylpyruvate and subsequently of phenylalanine (Phe), in etiolated seedlings. This is Arogenate dehydratase 3, chloroplastic from Arabidopsis thaliana (Mouse-ear cress).